A 308-amino-acid polypeptide reads, in one-letter code: Testis-expressed protein 52 (308 aa).

In terms of tissue distribution, expressed in Testis.

The chain is Testis-expressed protein 52 from Mus musculus (Mouse).